We begin with the raw amino-acid sequence, 543 residues long: CTP synthase (543 aa).

An amidoligase domain region spans residues 1 to 265; the sequence is MARYIFITGG…DDEVLAAFAI (265 aa). Ser13 contacts CTP. Ser13 contributes to the UTP binding site. Residue 14–19 coordinates ATP; it reads SLGKGL. Residue Tyr54 coordinates L-glutamine. Asp71 lines the ATP pocket. The Mg(2+) site is built by Asp71 and Glu139. CTP is bound by residues 146–148, 186–191, and Lys222; these read DIE and KTKPTQ. UTP-binding positions include 186–191 and Lys222; that span reads KTKPTQ. Position 238 to 240 (238 to 240) interacts with ATP; that stretch reads RDA. The 252-residue stretch at 291–542 folds into the Glutamine amidotransferase type-1 domain; that stretch reads TIAIVGKYTG…IEAALVRSRL (252 aa). An L-glutamine-binding site is contributed by Gly353. Residue Cys380 is the Nucleophile; for glutamine hydrolysis of the active site. L-glutamine is bound by residues 381–384, Glu404, and Arg470; that span reads FGMQ. Residues His515 and Glu517 contribute to the active site.

The protein belongs to the CTP synthase family. In terms of assembly, homotetramer.

It carries out the reaction UTP + L-glutamine + ATP + H2O = CTP + L-glutamate + ADP + phosphate + 2 H(+). The enzyme catalyses L-glutamine + H2O = L-glutamate + NH4(+). It catalyses the reaction UTP + NH4(+) + ATP = CTP + ADP + phosphate + 2 H(+). It functions in the pathway pyrimidine metabolism; CTP biosynthesis via de novo pathway; CTP from UDP: step 2/2. Its activity is regulated as follows. Allosterically activated by GTP, when glutamine is the substrate; GTP has no effect on the reaction when ammonia is the substrate. The allosteric effector GTP functions by stabilizing the protein conformation that binds the tetrahedral intermediate(s) formed during glutamine hydrolysis. Inhibited by the product CTP, via allosteric rather than competitive inhibition. Catalyzes the ATP-dependent amination of UTP to CTP with either L-glutamine or ammonia as the source of nitrogen. Regulates intracellular CTP levels through interactions with the four ribonucleotide triphosphates. The chain is CTP synthase from Rhodopseudomonas palustris (strain HaA2).